The primary structure comprises 303 residues: Elongation factor Ts (303 aa).

Positions 81–84 (TDFV) are involved in Mg(2+) ion dislocation from EF-Tu.

Belongs to the EF-Ts family.

Its subcellular location is the cytoplasm. In terms of biological role, associates with the EF-Tu.GDP complex and induces the exchange of GDP to GTP. It remains bound to the aminoacyl-tRNA.EF-Tu.GTP complex up to the GTP hydrolysis stage on the ribosome. The chain is Elongation factor Ts from Mesomycoplasma hyopneumoniae (strain 232) (Mycoplasma hyopneumoniae).